Reading from the N-terminus, the 98-residue chain is Acylphosphatase (98 aa).

In terms of domain architecture, Acylphosphatase-like spans 12–98; it reads RLSAWVHGHV…DATMTGFSER (87 aa). Active-site residues include Arg-27 and Asn-45.

This sequence belongs to the acylphosphatase family.

It catalyses the reaction an acyl phosphate + H2O = a carboxylate + phosphate + H(+). In Mycolicibacterium smegmatis (strain ATCC 700084 / mc(2)155) (Mycobacterium smegmatis), this protein is Acylphosphatase (acyP).